The following is a 356-amino-acid chain: Glutamine synthetase (356 aa).

In terms of domain architecture, GS beta-grasp spans 26-105; it reads IMAEYVWVDA…VLAECWNAGG (80 aa). A GS catalytic domain is found at 112–356; the sequence is FRHDCVKVMD…TKALLQFSLA (245 aa).

Belongs to the glutamine synthetase family. In terms of assembly, homooctamer.

It localises to the cytoplasm. It carries out the reaction L-glutamate + NH4(+) + ATP = L-glutamine + ADP + phosphate + H(+). In Fusarium solani subsp. phaseoli (Nectria haematococca), this protein is Glutamine synthetase (GLN1).